The primary structure comprises 293 residues: NAD kinase (293 aa).

Aspartate 73 (proton acceptor) is an active-site residue. Residues 73–74, 147–148, histidine 158, arginine 175, aspartate 177, 188–193, and glutamine 248 each bind NAD(+); these read DG, NE, and TAYSLS.

Belongs to the NAD kinase family. A divalent metal cation serves as cofactor.

It is found in the cytoplasm. The catalysed reaction is NAD(+) + ATP = ADP + NADP(+) + H(+). In terms of biological role, involved in the regulation of the intracellular balance of NAD and NADP, and is a key enzyme in the biosynthesis of NADP. Catalyzes specifically the phosphorylation on 2'-hydroxyl of the adenosine moiety of NAD to yield NADP. This is NAD kinase from Photobacterium profundum (strain SS9).